Consider the following 610-residue polypeptide: Calmegin (610 aa).

A signal peptide spans 1–19; the sequence is MHFQAFWLCLGLLFISINA. Residues 20 to 471 are Lumenal-facing; the sequence is EFMDDDVETE…LMAAAEGHPW (452 aa). N6-acetyllysine is present on Lys128. Cys151 and Cys185 are oxidised to a cystine. Residues 258-338 form a disordered region; it reads VPPIKPPKEI…KPDDWNEDTD (81 aa). The segment covering 263 to 284 has biased composition (basic and acidic residues); sequence PPKEIEDPNDKKPEEWDERAKI. 8 consecutive repeat copies span residues 267-280, 284-297, 303-316, 322-335, 339-352, 356-369, 370-383, and 384-397. The span at 317–332 shows a compositional bias: basic and acidic residues; sequence DEPKFIPDPNAEKPDD. An interaction with PPIB region spans residues 317–350; that stretch reads DEPKFIPDPNAEKPDDWNEDTDGEWEAPQILNPA. Cys351 and Cys355 are disulfide-bonded. A helical membrane pass occupies residues 472–492; sequence LWLIYLVTAGVPIALITSFCW. Topologically, residues 493 to 610 are cytoplasmic; it reads PRKVKKKHKD…SVRKRRVRKD (118 aa). The span at 521-548 shows a compositional bias: basic and acidic residues; it reads QEEKEEKAALEKPMDLEEEKKQNDGEML. Positions 521 to 610 are disordered; that stretch reads QEEKEEKAAL…SVRKRRVRKD (90 aa). Positions 549–571 are enriched in acidic residues; it reads EKEEESEPEEKSEEEIEIIEGQE. Ser560, Ser576, Ser579, Ser581, Ser591, Ser594, and Ser601 each carry phosphoserine. Over residues 601–610 the composition is skewed to basic residues; sequence SVRKRRVRKD.

Belongs to the calreticulin family. In terms of assembly, interacts with PPIB. Interacts with ADAM2. Interacts with PDILT. As to expression, detected in testis (at protein level). Detected in testis.

The protein localises to the endoplasmic reticulum membrane. Functions during spermatogenesis as a chaperone for a range of client proteins that are important for sperm adhesion onto the egg zona pellucida and for subsequent penetration of the zona pellucida. Required for normal sperm migration from the uterus into the oviduct. Required for normal male fertility. Binds calcium ions. This is Calmegin (CLGN) from Homo sapiens (Human).